We begin with the raw amino-acid sequence, 122 residues long: Large ribosomal subunit protein uL14 (122 aa).

Belongs to the universal ribosomal protein uL14 family. Part of the 50S ribosomal subunit. Forms a cluster with proteins L3 and L19. In the 70S ribosome, L14 and L19 interact and together make contacts with the 16S rRNA in bridges B5 and B8.

Its function is as follows. Binds to 23S rRNA. Forms part of two intersubunit bridges in the 70S ribosome. The sequence is that of Large ribosomal subunit protein uL14 from Symbiobacterium thermophilum (strain DSM 24528 / JCM 14929 / IAM 14863 / T).